The sequence spans 115 residues: Thioredoxin-1 (115 aa).

Residues 2–114 (LKRCNFKNQV…RQKVLEHVSA (113 aa)) enclose the Thioredoxin domain. Active-site nucleophile residues include C39 and C42. C39 and C42 are disulfide-bonded.

This sequence belongs to the thioredoxin family. Expressed in ASJ and ASI ciliated sensory neurons. Expressed in the intestine (at protein level).

Its function is as follows. Participates in various redox reactions through the reversible oxidation of its active center dithiol to a disulfide and catalyzes dithiol-disulfide exchange reactions. Shown to facilitate the reduction of insulin disulfide bonds. Might play a role in the reversible nitrosylation of cysteine residues in target proteins, and thereby contributing to the response to intracellular nitric oxide. Shapes the ASJ sensory neuron biphasic response to nitric oxide (NO) exposure; trans-nitrosylation activity might inhibit calcium flux to the cytoplasm in ASJ neurons when exposed to a NO stimulus, whereas de-nitrosylation activity might promote calcium flux when NO is diminished. By regulating the NO-induced ASJ sensory neuron activity, mediates the avoidance response to NO-producing organisms like P.aeruginosa. Positively regulates life span extension under normal and caloric restriction conditions, dauer formation and the oxidative stress response. Contributes to the down-regulation of expression of the insulin-like neuropeptide daf-28 in the ASJ neurons in a redox-independent fashion, thereby promoting dauer formation. Negatively regulates the nuclear localization of the intestinal skn-1 transcription factor in a p38 MAPK pathway-dependent and redox-independent fashion. This is Thioredoxin-1 (trx-1) from Caenorhabditis elegans.